We begin with the raw amino-acid sequence, 1159 residues long: ABC transporter G family member 24 (1159 aa).

Transmembrane regions (helical) follow at residues 11–31 (FNSI…GNNC) and 415–435 (VGSG…FLIF). The ABC transporter domain occupies 454–707 (LSFHNISCYV…FIKQKIAGMT (254 aa)). 497–504 (GLSGSGKT) is an ATP binding site. Residues 752-846 (QSTSPALSSN…DNNNKNNDDD (95 aa)) form a disordered region. Low complexity-rich tracts occupy residues 759–768 (SSNSNNSDIN) and 775–784 (INNPHNQNIH). The span at 785–795 (HQQHHHHHRHI) shows a compositional bias: basic residues. The segment covering 822–841 (DNINNNNNNNKVKNNDNNNK) has biased composition (low complexity). Positions 902-1154 (FLLRTTYFVH…LLAYVFLRFL (253 aa)) constitute an ABC transmembrane type-2 domain. The next 6 helical transmembrane spans lie at 909–929 (FVHI…PANL), 937–957 (FGAM…SLDL), 1005–1025 (YMIG…SLVL), 1047–1067 (ANMV…FLLA), 1074–1094 (YLIG…PVVN), and 1135–1155 (VLLG…RFLV).

It belongs to the ABC transporter superfamily. ABCG family. Eye pigment precursor importer (TC 3.A.1.204) subfamily.

The protein localises to the membrane. The chain is ABC transporter G family member 24 (abcG24) from Dictyostelium discoideum (Social amoeba).